We begin with the raw amino-acid sequence, 385 residues long: Succinate--CoA ligase [ADP-forming] subunit beta (385 aa).

The 229-residue stretch at Lys-9 to Glu-237 folds into the ATP-grasp domain. Residues Lys-45, Gly-52–Gly-54, Val-94, and Glu-101 contribute to the ATP site. Asn-192 and Asp-206 together coordinate Mg(2+). Substrate-binding positions include Asn-257 and Gly-314–Thr-316.

The protein belongs to the succinate/malate CoA ligase beta subunit family. Heterotetramer of two alpha and two beta subunits. Mg(2+) serves as cofactor.

It catalyses the reaction succinate + ATP + CoA = succinyl-CoA + ADP + phosphate. The catalysed reaction is GTP + succinate + CoA = succinyl-CoA + GDP + phosphate. Its pathway is carbohydrate metabolism; tricarboxylic acid cycle; succinate from succinyl-CoA (ligase route): step 1/1. Its function is as follows. Succinyl-CoA synthetase functions in the citric acid cycle (TCA), coupling the hydrolysis of succinyl-CoA to the synthesis of either ATP or GTP and thus represents the only step of substrate-level phosphorylation in the TCA. The beta subunit provides nucleotide specificity of the enzyme and binds the substrate succinate, while the binding sites for coenzyme A and phosphate are found in the alpha subunit. The protein is Succinate--CoA ligase [ADP-forming] subunit beta of Deinococcus deserti (strain DSM 17065 / CIP 109153 / LMG 22923 / VCD115).